The chain runs to 324 residues: Beta-ketoacyl-[acyl-carrier-protein] synthase III (324 aa).

Residues Cys112 and His249 contribute to the active site. Residues 250-254 (QANRR) are ACP-binding. Asn279 is a catalytic residue.

It belongs to the thiolase-like superfamily. FabH family. Homodimer.

The protein resides in the cytoplasm. The enzyme catalyses malonyl-[ACP] + acetyl-CoA + H(+) = 3-oxobutanoyl-[ACP] + CO2 + CoA. It participates in lipid metabolism; fatty acid biosynthesis. In terms of biological role, catalyzes the condensation reaction of fatty acid synthesis by the addition to an acyl acceptor of two carbons from malonyl-ACP. Catalyzes the first condensation reaction which initiates fatty acid synthesis and may therefore play a role in governing the total rate of fatty acid production. Possesses both acetoacetyl-ACP synthase and acetyl transacylase activities. Its substrate specificity determines the biosynthesis of branched-chain and/or straight-chain of fatty acids. The protein is Beta-ketoacyl-[acyl-carrier-protein] synthase III of Streptococcus pyogenes serotype M2 (strain MGAS10270).